A 450-amino-acid polypeptide reads, in one-letter code: Molybdate-anion transporter (450 aa).

12 helical membrane passes run 1–21 (MLVT…GLEL), 43–63 (LDFY…APYL), 79–99 (ILYV…SSLV), 128–148 (FVLL…FSAF), 174–194 (AAFW…AVAS), 195–215 (WIGL…ALAG), 249–269 (VLLL…FVFL), 278–298 (GAPL…GSSL), 311–331 (PMHL…MLTF), 344–364 (FIAF…MSFL), 376–396 (GVLN…LLVL), and 409–429 (FSIC…LFTV).

Belongs to the major facilitator superfamily.

Its subcellular location is the cell membrane. Functionally, mediates high-affinity intracellular uptake of the rare oligo-element molybdenum. This Pongo abelii (Sumatran orangutan) protein is Molybdate-anion transporter (MFSD5).